A 176-amino-acid chain; its full sequence is Translation initiation factor IF-3 (176 aa).

This sequence belongs to the IF-3 family. As to quaternary structure, monomer.

The protein localises to the cytoplasm. Functionally, IF-3 binds to the 30S ribosomal subunit and shifts the equilibrium between 70S ribosomes and their 50S and 30S subunits in favor of the free subunits, thus enhancing the availability of 30S subunits on which protein synthesis initiation begins. This Wolinella succinogenes (strain ATCC 29543 / DSM 1740 / CCUG 13145 / JCM 31913 / LMG 7466 / NCTC 11488 / FDC 602W) (Vibrio succinogenes) protein is Translation initiation factor IF-3.